The chain runs to 485 residues: Glutamate--tRNA ligase (485 aa).

The 'HIGH' region motif lies at 11-21; it reads PSPTGYMHVGN. Zn(2+) is bound by residues Cys-108, Cys-110, Cys-135, and Asp-137. A 'KMSKS' region motif is present at residues 252-256; that stretch reads KLSKR. Lys-255 contributes to the ATP binding site.

It belongs to the class-I aminoacyl-tRNA synthetase family. Glutamate--tRNA ligase type 1 subfamily. In terms of assembly, monomer. It depends on Zn(2+) as a cofactor.

Its subcellular location is the cytoplasm. It catalyses the reaction tRNA(Glu) + L-glutamate + ATP = L-glutamyl-tRNA(Glu) + AMP + diphosphate. Catalyzes the attachment of glutamate to tRNA(Glu) in a two-step reaction: glutamate is first activated by ATP to form Glu-AMP and then transferred to the acceptor end of tRNA(Glu). This Clostridium botulinum (strain Okra / Type B1) protein is Glutamate--tRNA ligase.